The following is a 188-amino-acid chain: Adenine phosphoribosyltransferase (188 aa).

The protein belongs to the purine/pyrimidine phosphoribosyltransferase family. Homodimer.

The protein localises to the cytoplasm. It catalyses the reaction AMP + diphosphate = 5-phospho-alpha-D-ribose 1-diphosphate + adenine. It participates in purine metabolism; AMP biosynthesis via salvage pathway; AMP from adenine: step 1/1. Its function is as follows. Catalyzes a salvage reaction resulting in the formation of AMP, that is energically less costly than de novo synthesis. The protein is Adenine phosphoribosyltransferase of Burkholderia cenocepacia (strain HI2424).